The primary structure comprises 436 residues: uncharacterized protein (436 aa).

A run of 12 helical transmembrane segments spans residues 38–58 (ILIFSQIFGGAGLGAGITVGA), 70–90 (VAGIPTALFTFGSAVAALLIG), 102–122 (LAGGFLIGGLGAIGVIIAALI), 125–145 (VALLFVSLLIYGAGMASNLQV), 160–180 (TAASMALVSTTLGAVVGPNLV), 197–217 (GPFIMSGAAFIIAGIILLIFL), 254–274 (IMVGAVIMILAQLIMTAIMTM), 291–311 (LVIGLHIAAMYLPSPLTGLLV), 319–339 (MAIASGATLLAAGLVAAIAPA), 342–362 (LSLLILALVLLGVGWNFGLLT), 383–403 (FDVLLALSGAAGGALSGMVVA), and 409–429 (ILSISGAVLSLLLIPVVIWYF).

Belongs to the major facilitator superfamily.

The protein localises to the cell membrane. This is an uncharacterized protein from Bacillus subtilis (strain 168).